Here is a 221-residue protein sequence, read N- to C-terminus: Putative transmembrane protein ORF25 (221 aa).

An N-terminal signal peptide occupies residues 1–23 (MTLAAKLIVLVYVALCFVNESTS). Asn19 and Asn179 each carry an N-linked (GlcNAc...) asparagine; by host glycan. Over 24-191 (QDHSNIYHET…LAKARGVPMS (168 aa)) the chain is Extracellular. The chain crosses the membrane as a helical span at residues 192–212 (VSVISGICAIILVIFPIFITI). The Cytoplasmic segment spans residues 213–221 (ANLRRVYLH).

The protein localises to the host membrane. In Ostreid herpesvirus 1 (isolate France) (OsHV-1), this protein is Putative transmembrane protein ORF25.